The chain runs to 199 residues: Large ribosomal subunit protein uL18 (199 aa).

It belongs to the universal ribosomal protein uL18 family. In terms of assembly, part of the 50S ribosomal subunit. Contacts the 5S and 23S rRNAs.

This is one of the proteins that bind and probably mediate the attachment of the 5S RNA into the large ribosomal subunit, where it forms part of the central protuberance. This Saccharolobus solfataricus (strain ATCC 35092 / DSM 1617 / JCM 11322 / P2) (Sulfolobus solfataricus) protein is Large ribosomal subunit protein uL18.